The following is a 642-amino-acid chain: Threonine--tRNA ligase (642 aa).

The region spanning 1 to 61 is the TGS domain; that stretch reads MPVIRFYDGS…REDAFIEFVD (61 aa). Residues 243–534 form a catalytic region; it reads DHRKIGKFLQ…LIEECSGNLP (292 aa). Positions 334, 385, and 511 each coordinate Zn(2+).

Belongs to the class-II aminoacyl-tRNA synthetase family. As to quaternary structure, homodimer. Zn(2+) serves as cofactor.

It is found in the cytoplasm. The enzyme catalyses tRNA(Thr) + L-threonine + ATP = L-threonyl-tRNA(Thr) + AMP + diphosphate + H(+). Its function is as follows. Catalyzes the attachment of threonine to tRNA(Thr) in a two-step reaction: L-threonine is first activated by ATP to form Thr-AMP and then transferred to the acceptor end of tRNA(Thr). Also edits incorrectly charged L-seryl-tRNA(Thr). This Buchnera aphidicola subsp. Acyrthosiphon pisum (strain 5A) protein is Threonine--tRNA ligase.